A 151-amino-acid polypeptide reads, in one-letter code: NADPH-dependent 7-cyano-7-deazaguanine reductase (151 aa).

The active-site Thioimide intermediate is the Cys-51. Asp-58 acts as the Proton donor in catalysis. Substrate contacts are provided by residues 73–75 and 92–93; these read VES and HE.

Belongs to the GTP cyclohydrolase I family. QueF type 1 subfamily.

The protein localises to the cytoplasm. It carries out the reaction 7-aminomethyl-7-carbaguanine + 2 NADP(+) = 7-cyano-7-deazaguanine + 2 NADPH + 3 H(+). It participates in tRNA modification; tRNA-queuosine biosynthesis. Functionally, catalyzes the NADPH-dependent reduction of 7-cyano-7-deazaguanine (preQ0) to 7-aminomethyl-7-deazaguanine (preQ1). This Bacteroides thetaiotaomicron (strain ATCC 29148 / DSM 2079 / JCM 5827 / CCUG 10774 / NCTC 10582 / VPI-5482 / E50) protein is NADPH-dependent 7-cyano-7-deazaguanine reductase.